The following is an 83-amino-acid chain: Mu-theraphotoxin-Hhn2o (83 aa).

An N-terminal signal peptide occupies residues Met1 to Ala21. Residues Ser22 to Arg48 constitute a propeptide that is removed on maturation. Intrachain disulfides connect Cys50-Cys65, Cys57-Cys70, and Cys64-Cys77. Leu81 carries the leucine amide modification.

It belongs to the neurotoxin 10 (Hwtx-1) family. 15 (Hntx-3) subfamily. As to quaternary structure, monomer. As to expression, expressed by the venom gland.

Its subcellular location is the secreted. Its function is as follows. Lethal neurotoxin. Selectively blocks tetrodotoxin-sensitive voltage-gated sodium channels (Nav). Does not affect tetrodotoxin-resistant voltage-gated sodium channels or calcium channels. The protein is Mu-theraphotoxin-Hhn2o of Cyriopagopus hainanus (Chinese bird spider).